The following is a 458-amino-acid chain: tRNA-2-methylthio-N(6)-dimethylallyladenosine synthase (458 aa).

Residues 3–120 (QKLYIETFGC…LPSMLEQVRC (118 aa)) form the MTTase N-terminal domain. [4Fe-4S] cluster contacts are provided by Cys-12, Cys-49, Cys-83, Cys-157, Cys-161, and Cys-164. The Radical SAM core domain occupies 143-375 (RADGPKAFVS…QAKIADNAAK (233 aa)). The TRAM domain occupies 378–441 (ASMVGSIQSV…PNSLRGRLIG (64 aa)).

It belongs to the methylthiotransferase family. MiaB subfamily. Monomer. [4Fe-4S] cluster serves as cofactor.

The protein resides in the cytoplasm. It catalyses the reaction N(6)-dimethylallyladenosine(37) in tRNA + (sulfur carrier)-SH + AH2 + 2 S-adenosyl-L-methionine = 2-methylsulfanyl-N(6)-dimethylallyladenosine(37) in tRNA + (sulfur carrier)-H + 5'-deoxyadenosine + L-methionine + A + S-adenosyl-L-homocysteine + 2 H(+). Its function is as follows. Catalyzes the methylthiolation of N6-(dimethylallyl)adenosine (i(6)A), leading to the formation of 2-methylthio-N6-(dimethylallyl)adenosine (ms(2)i(6)A) at position 37 in tRNAs that read codons beginning with uridine. The sequence is that of tRNA-2-methylthio-N(6)-dimethylallyladenosine synthase from Methylococcus capsulatus (strain ATCC 33009 / NCIMB 11132 / Bath).